The following is a 289-amino-acid chain: Cbb3-type cytochrome c oxidase subunit FixP (289 aa).

The Cytoplasmic portion of the chain corresponds to 1–33 (MADKHKHVDEVSGVETTGHEWDGIRELNNPLPR). Residues 34 to 56 (WWVYSFYATIIWAIGYAVAYPSW) form a helical membrane-spanning segment. The Periplasmic portion of the chain corresponds to 57-289 (PMLTEATKGV…VFVHSLGGGE (233 aa)). Cytochrome c domains are found at residues 110–198 (FAVS…MSLT) and 205–286 (HLVE…HSLG). Heme c is bound by residues Cys123, Cys126, His127, Met175, Cys218, Cys221, His222, and Met263.

This sequence belongs to the CcoP / FixP family. In terms of assembly, component of the cbb3-type cytochrome c oxidase at least composed of FixN, FixO, FixQ and FixP. The cofactor is heme c.

The protein resides in the cell inner membrane. The protein operates within energy metabolism; oxidative phosphorylation. Its function is as follows. C-type cytochrome. Part of the cbb3-type cytochrome c oxidase complex. FixP subunit is required for transferring electrons from donor cytochrome c via its heme groups to FixO subunit. From there, electrons are shuttled to the catalytic binuclear center of FixN subunit where oxygen reduction takes place. The complex also functions as a proton pump. This Sinorhizobium medicae (strain WSM419) (Ensifer medicae) protein is Cbb3-type cytochrome c oxidase subunit FixP.